A 119-amino-acid chain; its full sequence is Large ribosomal subunit protein bL20 (119 aa).

Belongs to the bacterial ribosomal protein bL20 family.

Its function is as follows. Binds directly to 23S ribosomal RNA and is necessary for the in vitro assembly process of the 50S ribosomal subunit. It is not involved in the protein synthesizing functions of that subunit. In Vesicomyosocius okutanii subsp. Calyptogena okutanii (strain HA), this protein is Large ribosomal subunit protein bL20.